The sequence spans 339 residues: Methyltransferase ptaI (339 aa).

The protein belongs to the methyltransferase superfamily.

It functions in the pathway secondary metabolite biosynthesis. In terms of biological role, methyltransferase; part of the gene cluster that mediates the biosynthesis of pestheic acid, a diphenyl ether which is a biosynthetic precursor of the unique chloropupukeananes. The biosynthesis initiates from condensation of acetate and malonate units catalyzed by the non-reducing PKS ptaA. As the ptaA protein is TE/CLC domain-deficient, hydrolysis and Claisen cyclization of the polyketide could be catalyzed by ptaB containing a beta-lactamase domain. The ptaB protein might hydrolyze the thioester bond between the ACP of ptaA and the intermediate to release atrochrysone carboxylic acid, which is spontaneously dehydrated to form endocrocin anthrone. Endocrocin anthrone is then converted to endocrocin, catalyzed by the anthrone oxygenase ptaC. Spontaneous decarboxylation of endocrocin occurs to generate emodin. An O-methyltransferase (ptaH or ptaI) could methylate emodin to form physcion. PtaJ could then catalyze the oxidative cleavage of physcion, and rotation of the intermediate could then afford desmethylisosulochrin. PtaF, a putative NADH-dependent oxidoreductase, might also participate in the oxidative cleavage step. Desmethylisosulochrin is then transformed by another O-methyltransferase (ptaH or ptaI) to form isosulochrin. Chlorination of isosulochrin by ptaM in the cyclohexadienone B ring then produces chloroisosulochrin. PtaE is responsible for the oxidative coupling reactions of both benzophenones isosulouchrin and chloroisosulochrin to RES-1214-1 and pestheic acid respectively, regardless of chlorination. This chain is Methyltransferase ptaI, found in Pestalotiopsis fici (strain W106-1 / CGMCC3.15140).